A 556-amino-acid chain; its full sequence is Formate--tetrahydrofolate ligase (556 aa).

65 to 72 serves as a coordination point for ATP; that stretch reads TPAGEGKT.

This sequence belongs to the formate--tetrahydrofolate ligase family.

The catalysed reaction is (6S)-5,6,7,8-tetrahydrofolate + formate + ATP = (6R)-10-formyltetrahydrofolate + ADP + phosphate. It functions in the pathway one-carbon metabolism; tetrahydrofolate interconversion. The protein is Formate--tetrahydrofolate ligase of Heliobacterium modesticaldum (strain ATCC 51547 / Ice1).